The chain runs to 358 residues: UDP-N-acetylglucosamine--N-acetylmuramyl-(pentapeptide) pyrophosphoryl-undecaprenol N-acetylglucosamine transferase (358 aa).

Residues 11–13 (TGG), Asn120, Arg161, Ser188, and Gln282 contribute to the UDP-N-acetyl-alpha-D-glucosamine site.

It belongs to the glycosyltransferase 28 family. MurG subfamily.

The protein localises to the cell inner membrane. The enzyme catalyses di-trans,octa-cis-undecaprenyl diphospho-N-acetyl-alpha-D-muramoyl-L-alanyl-D-glutamyl-meso-2,6-diaminopimeloyl-D-alanyl-D-alanine + UDP-N-acetyl-alpha-D-glucosamine = di-trans,octa-cis-undecaprenyl diphospho-[N-acetyl-alpha-D-glucosaminyl-(1-&gt;4)]-N-acetyl-alpha-D-muramoyl-L-alanyl-D-glutamyl-meso-2,6-diaminopimeloyl-D-alanyl-D-alanine + UDP + H(+). The protein operates within cell wall biogenesis; peptidoglycan biosynthesis. Its function is as follows. Cell wall formation. Catalyzes the transfer of a GlcNAc subunit on undecaprenyl-pyrophosphoryl-MurNAc-pentapeptide (lipid intermediate I) to form undecaprenyl-pyrophosphoryl-MurNAc-(pentapeptide)GlcNAc (lipid intermediate II). The sequence is that of UDP-N-acetylglucosamine--N-acetylmuramyl-(pentapeptide) pyrophosphoryl-undecaprenol N-acetylglucosamine transferase from Synechococcus sp. (strain CC9902).